Here is a 432-residue protein sequence, read N- to C-terminus: Adenylosuccinate synthetase (432 aa).

Residues 13–19 and 41–43 contribute to the GTP site; these read GDEGKGK and GHT. Catalysis depends on Asp-14, which acts as the Proton acceptor. Mg(2+) is bound by residues Asp-14 and Gly-41. IMP contacts are provided by residues 14–17, 39–42, Thr-130, Arg-144, Gln-225, Thr-240, and Arg-304; these read DEGK and NAGH. The Proton donor role is filled by His-42. 300 to 306 provides a ligand contact to substrate; it reads AVTGRPR. Residues Arg-306, 332-334, and 415-417 contribute to the GTP site; these read KLD and STG.

The protein belongs to the adenylosuccinate synthetase family. As to quaternary structure, homodimer. Requires Mg(2+) as cofactor.

The protein resides in the cytoplasm. The enzyme catalyses IMP + L-aspartate + GTP = N(6)-(1,2-dicarboxyethyl)-AMP + GDP + phosphate + 2 H(+). Its pathway is purine metabolism; AMP biosynthesis via de novo pathway; AMP from IMP: step 1/2. In terms of biological role, plays an important role in the de novo pathway of purine nucleotide biosynthesis. Catalyzes the first committed step in the biosynthesis of AMP from IMP. The chain is Adenylosuccinate synthetase from Actinobacillus pleuropneumoniae serotype 7 (strain AP76).